A 224-amino-acid polypeptide reads, in one-letter code: Response regulator protein GraR (224 aa).

Residues 2 to 115 (QILLVEDDNT…VLIAKLQAIY (114 aa)) enclose the Response regulatory domain. D51 is subject to 4-aspartylphosphate. The segment at residues 126 to 224 (KRTLSWQDAT…KVGKGYLAHE (99 aa)) is a DNA-binding region (ompR/PhoB-type).

In terms of processing, phosphorylated by GraS.

The protein localises to the cytoplasm. In terms of biological role, member of the two-component regulatory system GraR/GraS involved in resistance against cationic antimicrobial peptides (CAMPs). This chain is Response regulator protein GraR (graR), found in Staphylococcus epidermidis (strain ATCC 35984 / DSM 28319 / BCRC 17069 / CCUG 31568 / BM 3577 / RP62A).